The following is a 1032-amino-acid chain: MTVKAPSVTSLRISKLSANQVQVRWDDVGANFYYFVEIAETKTNSGENLPSNQYRWINLGYTANNSFFFDDADPLTTYIIRVATAAQDFEQSDWIYTEEFETFATNAYTFQNMIEMQLANKFIQEKFTLNNSDYVNFNNDTIMAALMNESFQFSPSYVDVSSISNFIIGENEYHEIQGSIQQVCKDINRVYLMESEGILYLFERYQPVVKVSNDKGQTWKAVKLFNDRVGYPLSKTVYYQSANTTYVLGYDKIFYGRKSTDVRWSADDVRFSSQDITFAKLGDQLHLGFDVEIFATYATLPANVYRIAEAITCTDDYIYVVARDKVRYIKTSNALIDFDPLSPTYSERLFEPDTMTITGNPKAVCYKMDSICDKVFALIIGEVETLNANPRTSKIIDSADKGIYVLNHDEKTWKRVFGNTEEERRRIQPGYANMSTDGKLVSLSSSNFKFLSDNVVNDPETAAKYQLIGAVKYEFPREWLADKHYHMMAFIADETSDWETFTPQPMKYYAEPFFNWSKKSNTRCWINNSDRAVVVYADLKYTKVIENIPETSPDRLVHEYWDDGDCTIVMPNVKFTGFKKYASGMLFYKASGEIISYYDFNYRVRDTVEIIWKPTEVFLKAFLQNQEHETPWSPEEERGLADPDLRPLIGTMMPDSYLLQDSNFEAFCEAYIQYLSDGYGTQYNNLRNLIRNQYPREEHAWEYLWSEIYKRNIYLNADKRDAVARFFESRSYDFYSTKGIEASYKFLFKVLYNEEVEIEIESGAGTEYDIIVQSDSLTEDLVGQTIYTATGRCNVTYIERSYSNGKLQWTVTIHNLLGRLIAGQEVKAERLPSFEGEIIRGVKGKDLLQNNIDYINRSRSYYVMKIKSNLPSSRWKSDVIRFVHPVGFGFIAITLLTMFINVGLTLKHTETIINKYKNYKWDSGLPTEYADRIAKLTPTGEIEHDSVTGEAIYEPGPMAGVKYPLPDDYNAENNNSIFQGQLPSERRKLMSPLFDASGTTFAQFRDLVNKRLKDNIGNPRDPENPTQVKIDE.

Residues leucine 1012 to glutamate 1032 are disordered.

Belongs to the T4likevirus baseplate wedge protein gp7 family. Heterotrimer with gp6; assembles as a (gp6)2-gp7 heterotrimeric molecule. The (gp6)2-gp7 heterotrimeric molecule further interacts with gp25 and gp53. The gp25-(gp6)2-gp7 module is involved in sheath contraction. Interacts with gp8. Binds to gp10 homotrimer; disulfide-linked. Heteromultimer with gp10; a gp10 molecule is disulfide-linked to gp7 and the other two remaining gp10 molecules form a disulfide bond. Part of the baseplate macromolecular complex which consists of gp5, gp5.4, gp27 (central spike complex); gp6, gp25, gp53 (inner baseplate); gp7, gp8 (intermediate baseplate); gp9, gp10, gp11, gp12 (peripheral); gp48 and gp54 (proximal region of the tail tube).

The protein localises to the virion. In terms of biological role, intermediate/inner baseplate protein. The gp25-(gp6)2-gp7 module is involved in sheath contraction. Involved in the tail assembly. The chain is Baseplate wedge protein gp7 (7) from Enterobacteria phage T4 (Bacteriophage T4).